We begin with the raw amino-acid sequence, 79 residues long: Beta-defensin 15 (79 aa).

A signal peptide spans Met-1–Ala-20. Cystine bridges form between Cys-26/Cys-53, Cys-33/Cys-47, and Cys-37/Cys-54.

The protein belongs to the beta-defensin family. In terms of tissue distribution, expressed in testis and to a lesser extent in epididymis (caput, corpus and cauda). Also weakly expressed in kidneys and colon.

Its subcellular location is the secreted. In terms of biological role, has antibacterial activity. This is Beta-defensin 15 (Defb15) from Mus musculus (Mouse).